The chain runs to 147 residues: Cell division protein SepF 1 (147 aa).

The protein belongs to the SepF family. In terms of assembly, homodimer. Interacts with FtsZ.

Its subcellular location is the cytoplasm. Cell division protein that is part of the divisome complex and is recruited early to the Z-ring. Probably stimulates Z-ring formation, perhaps through the cross-linking of FtsZ protofilaments. Its function overlaps with FtsA. The chain is Cell division protein SepF 1 from Desulforamulus reducens (strain ATCC BAA-1160 / DSM 100696 / MI-1) (Desulfotomaculum reducens).